Reading from the N-terminus, the 256-residue chain is Thioredoxin-dependent peroxide reductase, mitochondrial (256 aa).

Residues 1 to 61 (MAAAVGRLLR…KLFSTSSSYH (61 aa)) constitute a mitochondrion transit peptide. One can recognise a Thioredoxin domain in the interval 63-221 (PAVTQHAPYF…TLRLVKAFQY (159 aa)). Lysine 83 bears the N6-succinyllysine mark. Lysine 91 carries the N6-acetyllysine; alternate modification. Lysine 91 bears the N6-succinyllysine; alternate mark. Cysteine 108 serves as the catalytic Cysteine sulfenic acid (-SOH) intermediate. Threonine 146 carries the phosphothreonine modification.

It belongs to the peroxiredoxin family. AhpC/Prx1 subfamily. As to quaternary structure, homodimer; disulfide-linked, upon oxidation. 6 homodimers assemble to form a ring-like dodecamer. Interacts with NEK6. Interacts with LRRK2. Interacts with MAP3K13. Interacts with RPS6KC1 (via PX domain). In terms of processing, phosphorylated by LRRK2; phosphorylation reduces perodixase activity. Post-translationally, the enzyme can be inactivated by further oxidation of the cysteine sulfenic acid (C(P)-SOH) to sulphinic acid (C(P)-SO2H) and sulphonic acid (C(P)-SO3H) instead of its condensation to a disulfide bond. S-palmitoylated.

It localises to the mitochondrion. The protein localises to the cytoplasm. Its subcellular location is the early endosome. The enzyme catalyses a hydroperoxide + [thioredoxin]-dithiol = an alcohol + [thioredoxin]-disulfide + H2O. Thiol-specific peroxidase that catalyzes the reduction of hydrogen peroxide and organic hydroperoxides to water and alcohols, respectively. Plays a role in cell protection against oxidative stress by detoxifying peroxides. Acts synergistically with MAP3K13 to regulate the activation of NF-kappa-B in the cytosol. Required for the maintenance of physical strength. The chain is Thioredoxin-dependent peroxide reductase, mitochondrial (PRDX3) from Pongo abelii (Sumatran orangutan).